Here is a 164-residue protein sequence, read N- to C-terminus: Protein-export protein SecB (164 aa).

This sequence belongs to the SecB family. Homotetramer, a dimer of dimers. One homotetramer interacts with 1 SecA dimer.

The protein localises to the cytoplasm. In terms of biological role, one of the proteins required for the normal export of preproteins out of the cell cytoplasm. It is a molecular chaperone that binds to a subset of precursor proteins, maintaining them in a translocation-competent state. It also specifically binds to its receptor SecA. This chain is Protein-export protein SecB, found in Janthinobacterium sp. (strain Marseille) (Minibacterium massiliensis).